A 322-amino-acid chain; its full sequence is Aspartate--ammonia ligase (322 aa).

It belongs to the class-II aminoacyl-tRNA synthetase family. AsnA subfamily.

It localises to the cytoplasm. It catalyses the reaction L-aspartate + NH4(+) + ATP = L-asparagine + AMP + diphosphate + H(+). It participates in amino-acid biosynthesis; L-asparagine biosynthesis; L-asparagine from L-aspartate (ammonia route): step 1/1. The polypeptide is Aspartate--ammonia ligase (Lactiplantibacillus plantarum (strain ATCC BAA-793 / NCIMB 8826 / WCFS1) (Lactobacillus plantarum)).